Reading from the N-terminus, the 193-residue chain is MTEYALLFVSILLVNNFVLVKFLGLCPFMGVSKKLETAIGMGMATTFVMTVGSMFSWLVNEFILVPLDILYLRTMAFILVLAVVVQFSEMFVRKVSPELYRLLGIFLPLITTNCAVLGVVLLNINLSHGFLKSTIYGFGGAAGFSLVMVLFAAIRERLAVSDIPAPFRGSSIALITAGLMSLAFMGFTGLVKF.

The next 6 membrane-spanning stretches (helical) occupy residues 5 to 25, 39 to 59, 62 to 82, 102 to 122, 134 to 154, and 171 to 191; these read ALLF…FLGL, IGMG…SWLV, FILV…LVLA, LLGI…VVLL, TIYG…FAAI, and SIAL…TGLV.

This sequence belongs to the NqrDE/RnfAE family. The complex is composed of six subunits: RnfA, RnfB, RnfC, RnfD, RnfE and RnfG.

The protein resides in the cell inner membrane. Its function is as follows. Part of a membrane-bound complex that couples electron transfer with translocation of ions across the membrane. In Pectobacterium carotovorum subsp. carotovorum (strain PC1), this protein is Ion-translocating oxidoreductase complex subunit A.